A 708-amino-acid polypeptide reads, in one-letter code: Fatty acid oxidation complex subunit alpha (708 aa).

Positions 1-190 are enoyl-CoA hydratase; the sequence is MSQDKAFTME…KAGLVTEVVP (190 aa). The tract at residues 310–708 is 3-hydroxyacyl-CoA dehydrogenase; sequence DSVKRVGVLG…MLENGWNFYQ (399 aa).

It in the N-terminal section; belongs to the enoyl-CoA hydratase/isomerase family. This sequence in the central section; belongs to the 3-hydroxyacyl-CoA dehydrogenase family. As to quaternary structure, heterotetramer of two alpha chains (FadJ) and two beta chains (FadI).

It is found in the cytoplasm. It catalyses the reaction a (3S)-3-hydroxyacyl-CoA = a (2E)-enoyl-CoA + H2O. The catalysed reaction is a 4-saturated-(3S)-3-hydroxyacyl-CoA = a (3E)-enoyl-CoA + H2O. It carries out the reaction a (3S)-3-hydroxyacyl-CoA + NAD(+) = a 3-oxoacyl-CoA + NADH + H(+). The enzyme catalyses (3S)-3-hydroxybutanoyl-CoA = (3R)-3-hydroxybutanoyl-CoA. Its pathway is lipid metabolism; fatty acid beta-oxidation. Functionally, catalyzes the formation of a hydroxyacyl-CoA by addition of water on enoyl-CoA. Also exhibits 3-hydroxyacyl-CoA epimerase and 3-hydroxyacyl-CoA dehydrogenase activities. The chain is Fatty acid oxidation complex subunit alpha from Idiomarina loihiensis (strain ATCC BAA-735 / DSM 15497 / L2-TR).